We begin with the raw amino-acid sequence, 476 residues long: Inner membrane transporter YcaM (476 aa).

Topologically, residues 1 to 9 are cytoplasmic; sequence MAGNVQEKQ. The chain crosses the membrane as a helical span at residues 10 to 30; sequence LRWYNIALMSFITVWGFGNVV. The Periplasmic portion of the chain corresponds to 31–38; that stretch reads NNYANQGL. The helical transmembrane segment at 39–59 threads the bilayer; sequence VVVFSWVFIFALYFTPYALIV. Topologically, residues 60 to 80 are cytoplasmic; it reads GQLGSTFKDGKGGVSTWIKHT. The chain crosses the membrane as a helical span at residues 81 to 101; it reads MGPGLAYLAAWTYWVVHIPYL. At 102–125 the chain is on the periplasmic side; the sequence is AQKPQAILIALGWAMKGDGSLIKE. A helical membrane pass occupies residues 126–146; sequence YSVVALQGLTLVLFIFFMWVA. Topologically, residues 147–154 are cytoplasmic; the sequence is SRGMKSLK. A helical transmembrane segment spans residues 155-175; that stretch reads IVGSVAGIAMFVMSLLYVAMA. The Periplasmic portion of the chain corresponds to 176–195; it reads VTAPAITEVHIATTNITWET. Residues 196 to 216 traverse the membrane as a helical segment; that stretch reads FIPHIDFTYITTISMLVFAVG. Over 217-240 the chain is Cytoplasmic; the sequence is GAEKISPYVNQTRNPGKEFPKGML. The chain crosses the membrane as a helical span at residues 241 to 261; that stretch reads CLAVMVAVCAILGSLAMGMMF. Residues 262 to 291 lie on the Periplasmic side of the membrane; that stretch reads DSRNIPDDLMTNGQYYAFQKLGEYYNMGNT. A helical transmembrane segment spans residues 292-312; it reads LMVIYAIANTLGQVAALVFSI. The Cytoplasmic portion of the chain corresponds to 313–343; sequence DAPLKVLLGDADSKYIPASLCRTNASGTPVN. Residues 344-364 traverse the membrane as a helical segment; sequence GYFLTLVLVAILIMLPTLGIG. Topologically, residues 365-375 are periplasmic; that stretch reads DMNNLYKWLLN. Residues 376 to 396 traverse the membrane as a helical segment; sequence LNSVVMPLRYLWVFVAFIAVV. Residues 397-414 lie on the Cytoplasmic side of the membrane; sequence RLAQKYKPEYVFIRNKPL. The helical transmembrane segment at 415–435 threads the bilayer; sequence AMTVGIWCFAFTAFACLTGIF. The Periplasmic segment spans residues 436–448; that stretch reads PKMEAFTAEWTFQ. Residues 449-469 form a helical membrane-spanning segment; it reads LALNVATPFVLVGLGLIFPLL. At 470 to 476 the chain is on the cytoplasmic side; sequence ARKANSK.

The protein belongs to the amino acid-polyamine-organocation (APC) superfamily.

The protein resides in the cell inner membrane. The protein is Inner membrane transporter YcaM (ycaM) of Escherichia coli (strain K12).